The chain runs to 593 residues: MALLISCGEVTSSQFTVFRLLNQSLDFVSDNVSRLLAPIFTNLRDFEMRLSCIERPPSISGNHSHLCTEKWFSDQKDYDQKEDPEAIFNVLDYILKSSLDRLASLRESVCQTKSFDYDDCLSIHSSIMRDLCLQGKLDAALWLRKKMIYSGVIPGLITHNHLLNGLCKAGYIEKADGLVREMREMGPSPNCVSYNTLIKGLCSVNNVDKALYLFNTMNKYGIRPNRVTCNIIVHALCQKGVIGNNNKKLLEEILDSSQANAPLDIVICTILMDSCFKNGNVVQALEVWKEMSQKNVPADSVVYNVIIRGLCSSGNMVAAYGFMCDMVKRGVNPDVFTYNTLISALCKEGKFDEACDLHGTMQNGGVAPDQISYKVIIQGLCIHGDVNRANEFLLSMLKSSLLPEVLLWNVVIDGYGRYGDTSSALSVLNLMLSYGVKPNVYTNNALIHGYVKGGRLIDAWWVKNEMRSTKIHPDTTTYNLLLGAACTLGHLRLAFQLYDEMLRRGCQPDIITYTELVRGLCWKGRLKKAESLLSRIQATGITIDHVPFLILAKKYTRLQRPGEAYLVYKKWLATRNRGVSCPSILNHMHTEEQ.

PPR repeat units lie at residues 120–154 (CLSIHSSIMRDLCLQGKLDAALWLRKKMIYSGVIP), 155–189 (GLITHNHLLNGLCKAGYIEKADGLVREMREMGPSP), 190–224 (NCVSYNTLIKGLCSVNNVDKALYLFNTMNKYGIRP), 225–256 (NRVTCNIIVHALCQKGVIGNNNKKLLEEILDS), 264–298 (DIVICTILMDSCFKNGNVVQALEVWKEMSQKNVPA), 299–333 (DSVVYNVIIRGLCSSGNMVAAYGFMCDMVKRGVNP), 334–368 (DVFTYNTLISALCKEGKFDEACDLHGTMQNGGVAP), 369–403 (DQISYKVIIQGLCIHGDVNRANEFLLSMLKSSLLP), 404–438 (EVLLWNVVIDGYGRYGDTSSALSVLNLMLSYGVKP), 439–473 (NVYTNNALIHGYVKGGRLIDAWWVKNEMRSTKIHP), 474–508 (DTTTYNLLLGAACTLGHLRLAFQLYDEMLRRGCQP), and 509–543 (DIITYTELVRGLCWKGRLKKAESLLSRIQATGITI).

This sequence belongs to the PPR family. P subfamily.

In Arabidopsis thaliana (Mouse-ear cress), this protein is Pentatricopeptide repeat-containing protein At5g24830.